Reading from the N-terminus, the 871-residue chain is Bifunctional cordycepin biosynthesis cluster protein 3 (871 aa).

The protein operates within secondary metabolite biosynthesis. In terms of biological role, nucleoside/nucleotide kinase; part of the gene cluster that mediates the biosynthesis of cordycepin (COR) and pentostatin (PTN), two adenosine analogs with related bioactivity profiles as both mimic adenosine and can inhibit some of the processes that are adenosine dependent. Within the pathway, cns3 catalyzes both the first step of cordycepin biosynthesis by phosphorylating adenosine into 3'-AMP via its kinase activity and the conversion of adenosine into pentostatin via its ATP phosphoribosyltransferase activity. The first step of cordycepin biosynthesis involves hydroxyl phosphorylation of the 3'-OH position on adenosine to produce adenosine-3'-monophosphate (3'-AMP), catalyzed by kinase activity of cns3. Next, 3'-AMP is dephosphorylated to 2'-carbonyl-3'-deoxyadenosine (2'-C-3'-dA) by cns2, which is finally converted to cordycepin (3'-deoxyadenosine) by the oxidoreductase cns1. This Cordyceps militaris (strain CM01) (Caterpillar fungus) protein is Bifunctional cordycepin biosynthesis cluster protein 3.